A 502-amino-acid chain; its full sequence is Transmembrane prolyl 4-hydroxylase (502 aa).

Positions 1–29 are disordered; the sequence is MAAAAVTGQRPETAAAEEASRPQWAPPDH. At 1–60 the chain is on the cytoplasmic side; the sequence is MAAAAVTGQRPETAAAEEASRPQWAPPDHCQAQAAAGLGDGEDAPVRPLCKPRGICSRAY. Residues 61–81 form a helical; Signal-anchor for type II membrane protein membrane-spanning segment; it reads FLVLMVFVHLYLGNVLALLLF. Over 82 to 502 the chain is Lumenal; sequence VHYSNGDESS…RAYRDARVEL (421 aa). A disordered region spans residues 89-111; the sequence is ESSDPGPQHRAQGPGPEPTLGPL. EF-hand domains follow at residues 185–220 and 224–259; these read TMQV…GNGW and PESI…DFHK. The Ca(2+) site is built by Asp-198, Asn-200, Asp-202, His-204, Glu-209, Asp-237, Asp-239, Asp-241, and Glu-248. The Fe2OG dioxygenase domain occupies 310-460; sequence LSEPLQVVRY…KWIANNWINV (151 aa). Residues His-328 and Asp-330 each coordinate Fe cation. N-linked (GlcNAc...) asparagine glycosylation is found at Asn-348 and Asn-368. Glu-374 serves as a coordination point for Fe cation. Residue Asn-382 is glycosylated (N-linked (GlcNAc...) asparagine). Lys-451 lines the 2-oxoglutarate pocket.

As to quaternary structure, homodimer. It depends on Fe(2+) as a cofactor. L-ascorbate is required as a cofactor. Glycosylated. In terms of tissue distribution, widely expressed with highest levels in adult pancreas, heart, skeletal muscle, brain, placenta, kidney and adrenal gland. Expressed at lower levels in epiphyseal cartilage and in fibroblasts.

The protein resides in the endoplasmic reticulum membrane. It carries out the reaction L-prolyl-[hypoxia-inducible factor alpha subunit] + 2-oxoglutarate + O2 = trans-4-hydroxy-L-prolyl-[hypoxia-inducible factor alpha subunit] + succinate + CO2. In terms of biological role, catalyzes the post-translational formation of 4-hydroxyproline in hypoxia-inducible factor (HIF) alpha proteins. Hydroxylates HIF1A at 'Pro-402' and 'Pro-564'. May function as a cellular oxygen sensor and, under normoxic conditions, may target HIF through the hydroxylation for proteasomal degradation via the von Hippel-Lindau ubiquitination complex. This Homo sapiens (Human) protein is Transmembrane prolyl 4-hydroxylase (P4HTM).